Reading from the N-terminus, the 307-residue chain is 4-hydroxythreonine-4-phosphate dehydrogenase (307 aa).

Residues H126 and T127 each contribute to the substrate site. A divalent metal cation contacts are provided by H156, H195, and H251. Substrate-binding residues include K259, N268, and R277.

This sequence belongs to the PdxA family. In terms of assembly, homodimer. The cofactor is Zn(2+). It depends on Mg(2+) as a cofactor. Co(2+) is required as a cofactor.

The protein resides in the cytoplasm. The catalysed reaction is 4-(phosphooxy)-L-threonine + NAD(+) = 3-amino-2-oxopropyl phosphate + CO2 + NADH. Its pathway is cofactor biosynthesis; pyridoxine 5'-phosphate biosynthesis; pyridoxine 5'-phosphate from D-erythrose 4-phosphate: step 4/5. In terms of biological role, catalyzes the NAD(P)-dependent oxidation of 4-(phosphooxy)-L-threonine (HTP) into 2-amino-3-oxo-4-(phosphooxy)butyric acid which spontaneously decarboxylates to form 3-amino-2-oxopropyl phosphate (AHAP). The sequence is that of 4-hydroxythreonine-4-phosphate dehydrogenase from Helicobacter pylori (strain J99 / ATCC 700824) (Campylobacter pylori J99).